The chain runs to 113 residues: Protein C21/B27 (113 aa).

The sequence is that of Protein C21/B27 from Homo sapiens (Human).